The sequence spans 267 residues: Actin maturation protease (267 aa).

Positions 1 to 32 are disordered; that stretch reads MSNISSVAPPPPPPPMIVTPSTPATTKERPVG. The span at 8-17 shows a compositional bias: pro residues; sequence APPPPPPPMI. The tract at residues 74–188 is peptidase C39-like; that stretch reads SIVQVGPTCG…WALIVGYLVD (115 aa). C82 is an active-site residue.

It belongs to the ACTMAP family.

The enzyme catalyses N-terminal N(alpha)-acetyl-L-cysteinyl-L-aspartyl-[protein] + H2O = N-terminal L-aspartyl-[protein] + N-acetyl-L-cysteine. Its function is as follows. Actin maturation protease that specifically mediates the cleavage of immature acetylated N-terminal actin, thereby contributing to actin maturation. The protein is Actin maturation protease of Drosophila melanogaster (Fruit fly).